The primary structure comprises 32 residues: Ranatuerin-2BYa (32 aa).

Cysteines 27 and 32 form a disulfide.

As to expression, expressed by the skin glands.

The protein resides in the secreted. Antibacterial activity against Gram-positive bacterium S.aureus and Gram-negative bacterium E.coli. Weak hemolytic activity. This is Ranatuerin-2BYa from Rana boylii (Foothill yellow-legged frog).